A 190-amino-acid polypeptide reads, in one-letter code: Elongation factor P-like protein (190 aa).

It belongs to the elongation factor P family.

The sequence is that of Elongation factor P-like protein from Yersinia enterocolitica serotype O:8 / biotype 1B (strain NCTC 13174 / 8081).